The chain runs to 410 residues: Protein translocase subunit SecY (410 aa).

A run of 9 helical transmembrane segments spans residues 61 to 81 (LSVFALGIIPYINATITIQIL), 106 to 126 (ITKYLSFCFAFIESLAIVLRL), 135 to 155 (LYFIVQTTLILISGAMLVMWL), 170 to 190 (VIIFVNIASAFAKFLLNQLFV), 195 to 215 (FLDFASYFALIVFSIACIVFV), 248 to 268 (QGGVMPIILASSLLALVDYVI), 289 to 309 (ILFLLLYSAFIIFFNYLYCSL), 349 to 369 (LFGSGFLAFIVLAPNFLEFVF), and 373 to 393 (VFKGLAVSSLLIVVGVAIDLI).

The protein belongs to the SecY/SEC61-alpha family. In terms of assembly, component of the plastid Sec protein translocase complex, which is composed of at least SecY and SecE.

The protein localises to the plastid. It is found in the chloroplast thylakoid membrane. In terms of biological role, the central subunit of the protein translocation channel SecYE. Consists of two halves formed by TMs 1-5 and 6-10. These two domains form a lateral gate at the front which open onto the bilayer between TMs 2 and 7, and are clamped together by SecE at the back. The channel is closed by both a pore ring composed of hydrophobic SecY resides and a short helix (helix 2A) on the extracellular side of the membrane which forms a plug. The sequence is that of Protein translocase subunit SecY from Cyanidium caldarium (Red alga).